Here is a 348-residue protein sequence, read N- to C-terminus: MTAPSQVLKIRRPDDWHVHLRDGDMLKTVVPYTSEIYGRAIVMPNLASPITTVDAAIAYRQRILDAVPAGHDFTPLMTCYLTDSLDADELERGFHEGVFTAAKLYPANATTNSSHGVTSVDAIMPVLERMEKLGMPLLVHGEVTHADVDIFDREARFIDTVMEPLRQRLTTLKVVFEHITTKDAAQYVRDGNDYLAATITPQHLMFNRNDMLVGGIRPHLYCLPILKRNIHQQALRELVASGFTRAFLGTDSAPHSRHRKETSCGCAGCFNAPSALCSYAAVFEEMNALAHFEAFCSLNGPQFYGLPVNTGWVELVRDEQQVPENIALADDSLVPFLAGETVRWSVKK.

Zn(2+) is bound by residues His17 and His19. Residues His19–Arg21 and Asn45 each bind substrate. Lys103, His140, and His178 together coordinate Zn(2+). Lys103 is subject to N6-carboxylysine. His140 is a binding site for substrate. Leu223 is a substrate binding site. Position 251 (Asp251) interacts with Zn(2+). The active site involves Asp251. The substrate site is built by His255 and Ala267.

The protein belongs to the metallo-dependent hydrolases superfamily. DHOase family. Class II DHOase subfamily. Homodimer. Zn(2+) is required as a cofactor.

It catalyses the reaction (S)-dihydroorotate + H2O = N-carbamoyl-L-aspartate + H(+). The protein operates within pyrimidine metabolism; UMP biosynthesis via de novo pathway; (S)-dihydroorotate from bicarbonate: step 3/3. Its function is as follows. Catalyzes the reversible cyclization of carbamoyl aspartate to dihydroorotate. This Salmonella paratyphi B (strain ATCC BAA-1250 / SPB7) protein is Dihydroorotase.